Here is a 144-residue protein sequence, read N- to C-terminus: uncharacterized protein (144 aa).

N-linked (GlcNAc...) asparagine glycans are attached at residues asparagine 14 and asparagine 15. Residues 90–110 (FSWFIFGLFIACLLLCITLVL) form a helical membrane-spanning segment. The segment at 120–144 (NKATEVVPSSNIDDEEKQLSLSDMI) is disordered.

The protein localises to the membrane. This is an uncharacterized protein from Saccharomyces cerevisiae (strain ATCC 204508 / S288c) (Baker's yeast).